We begin with the raw amino-acid sequence, 112 residues long: Cytochrome c2 (112 aa).

Residues cysteine 14, cysteine 17, histidine 18, and methionine 91 each coordinate heme c.

Belongs to the cytochrome c family. Binds 1 heme c group covalently per subunit.

Cytochrome c2 is found mainly in purple, non-sulfur, photosynthetic bacteria where it functions as the electron donor to the oxidized bacteriochlorophyll in the photophosphorylation pathway. However, it may also have a role in the respiratory chain and is found in some non-photosynthetic bacteria. The protein is Cytochrome c2 (cycA) of Rhodospirillum rubrum.